Consider the following 437-residue polypeptide: GTPase Der (437 aa).

EngA-type G domains are found at residues 4 to 167 (PIVA…PDNA) and 175 to 352 (IHFS…QHHR). GTP contacts are provided by residues 10–17 (GRPNVGKS), 57–61 (DTGGI), 119–122 (NKVD), 181–188 (GRPNVGKS), 229–233 (DTAGI), and 294–297 (NKWD). Residues 353 to 437 (QRIQSAVLND…PIHLIKRQRQ (85 aa)) form the KH-like domain.

Belongs to the TRAFAC class TrmE-Era-EngA-EngB-Septin-like GTPase superfamily. EngA (Der) GTPase family. Associates with the 50S ribosomal subunit.

In terms of biological role, GTPase that plays an essential role in the late steps of ribosome biogenesis. The polypeptide is GTPase Der (Limosilactobacillus reuteri (strain DSM 20016) (Lactobacillus reuteri)).